A 43-amino-acid polypeptide reads, in one-letter code: Cytochrome b559 subunit beta (43 aa).

Residues 18-34 (WLAVHGLAIPTVFFLGG) form a helical membrane-spanning segment. His22 provides a ligand contact to heme.

Belongs to the PsbE/PsbF family. In terms of assembly, heterodimer of an alpha subunit and a beta subunit. PSII is composed of 1 copy each of membrane proteins PsbA, PsbB, PsbC, PsbD, PsbE, PsbF, PsbH, PsbI, PsbJ, PsbK, PsbL, PsbM, PsbT, PsbX, PsbY, PsbZ, Psb30/Ycf12, at least 3 peripheral proteins of the oxygen-evolving complex and a large number of cofactors. It forms dimeric complexes. Requires heme b as cofactor.

Its subcellular location is the plastid. It localises to the chloroplast thylakoid membrane. Its function is as follows. This b-type cytochrome is tightly associated with the reaction center of photosystem II (PSII). PSII is a light-driven water:plastoquinone oxidoreductase that uses light energy to abstract electrons from H(2)O, generating O(2) and a proton gradient subsequently used for ATP formation. It consists of a core antenna complex that captures photons, and an electron transfer chain that converts photonic excitation into a charge separation. The chain is Cytochrome b559 subunit beta from Thalassiosira pseudonana (Marine diatom).